Reading from the N-terminus, the 1200-residue chain is MECYYIVISSTHLSNGHFRNIKGVFRGPLSKNGNKTLDYAEKENTIAKALEDLKANFYCELCDKQYYKHQEFDNHINSYDHAHKQRLKELKQREFARNVASKSRKDERKQEKALQRLHKLAELRKETVCAPGSGPMFKSTTVTVRENLNDVSQRESVDPINNQQDLIPSEEKERDGTTALAETETASNCTANNCQIGDQSQAVHRHRIGFSFAFPKKATVKLESCSAAAFSEYSDESSMEKEFSRKTRFVPSTSHLQLPPPTCELLSSEEKGNSPPPEAMCTDKATAQTEERKITSNENNTLLTSSFCQLQHYIPTCSEADTCQNLAPFEDQLPMEAVIVNEDGPVSKSNPNIIEKNPTVPNDRTSAQMTTEENITINDVTKMETRNKIDHEPLTPSSTIEESIRLQKRPDLCKRQCDPFVPVLNKLGSTVLQWPSEMLAYTTTEPSISYSCNPLCFDFKSTKLNNNQDKNKLTLNDLFSEQKEDCCKGAHADCKDVPIARVTNDETGHSKNDYPQVTTLSPVHVLSNGCDLGQNENVGQRYKHISCTNRQTNKYKFTRCQIKRDMLNEKYDKMRLKETREHWFHKSRRKKKRRKLCRYHPGKSSKEPEGSGKTERSRQRTDEARKNPREPVLEKHPRSPERASDLHQLPDERPKAASTHLGEKETMNTTVNTESNDAAPGSQNCGGKNATVVNEQAKPLVIHSVKQNLTYVRTYCCWKARTSRYQEDDGSLASQSNVKGPTQNQPVKRGYSSLTNDSERIHRKRRQHSCSYSSDESLNQQHHLGEYLKPLSTSLISCQPKKKRRRKRSRLHIGDGTTKMKGNSNYPMKCSSLSQPDELAKDCIKEDINPQENVSIEKNSEQTEQTEIKGMLHPYNPLLSEPSGEGEHSVTETTPCDSSQTSNDLATPVNVTRDPSNSTTDNTLLEHNQRSQTTNSNEKQTPFKVTNPERNFRHSQAKSYICRYELAETIPQGKTNEASTEWLCYNSGILNTQPPLQFKEAHVSGHAFVTTEQILAPLPLPEQALLIPLENHDKLKHLPCEVYQHIIQPNMLTNKVKFTFPPPPLPPPSTPVQPLPLQRPFCSTSVTTIHHTVLQHHAAAAAAAAAAAAAGTFKVLQPHQQFLPQVPALARTSIPQISVGTVGPRLCPGGQPALVASPQMPIIPASVLHPSPLAFPPLPHSFFPSLLSPHPTVIPLQPLF.

The C2H2-type zinc finger occupies Phe-57–His-81. 6 disordered regions span residues Ser-252–Met-280, Asp-343–Ala-367, His-582–Gly-687, Glu-727–Ser-777, Gln-799–Met-828, and Pro-874–Glu-949. Over residues His-585–Lys-603 the composition is skewed to basic residues. The span at Ser-604–Thr-666 shows a compositional bias: basic and acidic residues. Polar residues-rich tracts occupy residues Met-667–Gly-687 and Leu-732–Asn-756. The span at Pro-800–Leu-811 shows a compositional bias: basic residues. The segment covering Thr-891–Lys-944 has biased composition (polar residues).

This Mus musculus (Mouse) protein is Zinc finger protein 804A (Znf804a).